The chain runs to 296 residues: Phosphatidylserine decarboxylase proenzyme (296 aa).

Catalysis depends on charge relay system; for autoendoproteolytic cleavage activity residues aspartate 113, histidine 169, and serine 256. Serine 256 acts as the Schiff-base intermediate with substrate; via pyruvic acid; for decarboxylase activity in catalysis. Serine 256 is modified (pyruvic acid (Ser); by autocatalysis).

It belongs to the phosphatidylserine decarboxylase family. PSD-B subfamily. Prokaryotic type II sub-subfamily. Heterodimer of a large membrane-associated beta subunit and a small pyruvoyl-containing alpha subunit. It depends on pyruvate as a cofactor. Post-translationally, is synthesized initially as an inactive proenzyme. Formation of the active enzyme involves a self-maturation process in which the active site pyruvoyl group is generated from an internal serine residue via an autocatalytic post-translational modification. Two non-identical subunits are generated from the proenzyme in this reaction, and the pyruvate is formed at the N-terminus of the alpha chain, which is derived from the carboxyl end of the proenzyme. The autoendoproteolytic cleavage occurs by a canonical serine protease mechanism, in which the side chain hydroxyl group of the serine supplies its oxygen atom to form the C-terminus of the beta chain, while the remainder of the serine residue undergoes an oxidative deamination to produce ammonia and the pyruvoyl prosthetic group on the alpha chain. During this reaction, the Ser that is part of the protease active site of the proenzyme becomes the pyruvoyl prosthetic group, which constitutes an essential element of the active site of the mature decarboxylase.

It is found in the cell membrane. The enzyme catalyses a 1,2-diacyl-sn-glycero-3-phospho-L-serine + H(+) = a 1,2-diacyl-sn-glycero-3-phosphoethanolamine + CO2. Its pathway is phospholipid metabolism; phosphatidylethanolamine biosynthesis; phosphatidylethanolamine from CDP-diacylglycerol: step 2/2. Its function is as follows. Catalyzes the formation of phosphatidylethanolamine (PtdEtn) from phosphatidylserine (PtdSer). The sequence is that of Phosphatidylserine decarboxylase proenzyme from Clostridium botulinum (strain Alaska E43 / Type E3).